The sequence spans 1941 residues: Myosin-7B (1941 aa).

The Myosin N-terminal SH3-like domain maps to 30 to 80; that stretch reads DGKKRVWVPDEQDAYVEAEVKTEATGGKVTVETKDQKVLTVRETEMQPMNP. The Myosin motor domain maps to 84-785; it reads DLLEDMAMMT…LLGILEELRD (702 aa). 177 to 184 lines the ATP pocket; that stretch reads GESGAGKT. 2 actin-binding regions span residues 662–684 and 764–778; these read LNKL…VPNE and QFGH…GLLG. One can recognise an IQ domain in the interval 788–817; it reads LAKVLTLLQARSRGRLMRLEYQRMLGGRDA. Residues 846-1935 adopt a coiled-coil conformation; it reads LLRSAQAEEE…KLRARSRDAL (1090 aa). The segment at 1887 to 1941 is disordered; sequence RQFEEAEQQASTNLAKYRKAQHELDDAEERADMAETQANKLRARSRDALGPKHKE. Residues 1930-1941 are compositionally biased toward basic and acidic residues; that stretch reads RSRDALGPKHKE.

The protein belongs to the TRAFAC class myosin-kinesin ATPase superfamily. Myosin family. As to quaternary structure, muscle myosin is a hexameric protein that consists of 2 heavy chain subunits (MHC), 2 alkali light chain subunits (MLC) and 2 regulatory light chain subunits (MLC-2).

The protein resides in the membrane. In terms of biological role, involved in muscle contraction. This Mus musculus (Mouse) protein is Myosin-7B (Myh7b).